Consider the following 83-residue polypeptide: ATP synthase subunit c (83 aa).

The next 2 helical transmembrane spans lie at 10–30 and 52–72; these read IAVA…FGLL and MFIV…IALF.

This sequence belongs to the ATPase C chain family. As to quaternary structure, F-type ATPases have 2 components, F(1) - the catalytic core - and F(0) - the membrane proton channel. F(1) has five subunits: alpha(3), beta(3), gamma(1), delta(1), epsilon(1). F(0) has three main subunits: a(1), b(2) and c(10-14). The alpha and beta chains form an alternating ring which encloses part of the gamma chain. F(1) is attached to F(0) by a central stalk formed by the gamma and epsilon chains, while a peripheral stalk is formed by the delta and b chains.

The protein resides in the cell inner membrane. In terms of biological role, f(1)F(0) ATP synthase produces ATP from ADP in the presence of a proton or sodium gradient. F-type ATPases consist of two structural domains, F(1) containing the extramembraneous catalytic core and F(0) containing the membrane proton channel, linked together by a central stalk and a peripheral stalk. During catalysis, ATP synthesis in the catalytic domain of F(1) is coupled via a rotary mechanism of the central stalk subunits to proton translocation. Functionally, key component of the F(0) channel; it plays a direct role in translocation across the membrane. A homomeric c-ring of between 10-14 subunits forms the central stalk rotor element with the F(1) delta and epsilon subunits. This is ATP synthase subunit c from Shewanella baltica (strain OS223).